Reading from the N-terminus, the 447-residue chain is MGRESLAVVSSPPSATAPSTAVSATSLAPGFRFHPTDEELVSYYLKRKVLGKPVRFDAIGEVDIYKHEPWDLAVFSKLKTRDQEWYFFSALDKKYGNGARMNRATNKGYWKATGKDREIRRDIQLLGMKKTLVFHSGRAPDGLRTNWVMHEYRLVEYETETNGSLLQDAYVLCRVFHKNNIGPPSGNRYAPFMEEEWADGGGALIPGIDVRVRVEALPQANGNNQMDQEMHSASKDLININELPRDATPMDIEPNQQNHHESAFKPQESNNHSGYEEDEDTLKREHAEEDERPPSLCILNKEAPLPLLQYKRRRQNESNNNSSRNTQDHCSSTITTVDNTTTLISSSAAAATNTAISALLEFSLMGISDKKENQQKEETSPPSPIASPEEKVNDLQKEVHQMSVERETFKLEMMSAEAMISILQSRIDALRQENEELKKKNASGQAS.

Positions 1–21 are disordered; sequence MGRESLAVVSSPPSATAPSTA. The NAC domain occupies 27–178; sequence LAPGFRFHPT…AYVLCRVFHK (152 aa). A DNA-binding region spans residues 126-184; it reads LGMKKTLVFHSGRAPDGLRTNWVMHEYRLVEYETETNGSLLQDAYVLCRVFHKNNIGPP. 2 disordered regions span residues 246–303 and 371–392; these read DATP…NKEA and KENQQKEETSPPSPIASPEEKV. Residues 281-293 are compositionally biased toward basic and acidic residues; that stretch reads TLKREHAEEDERP. The stretch at 392-447 forms a coiled coil; it reads VNDLQKEVHQMSVERETFKLEMMSAEAMISILQSRIDALRQENEELKKKNASGQAS.

Interacts with JMJ14 and NAC052. Mostly expressed in floral organs, and, at low levels, in other organs.

Its subcellular location is the nucleus. Transcriptional repressor that binds to the motif 5'-(C/T)A(C/A)G-3' in the promoter of target genes. Also binds to the 5'-CTTGNNNNNCAAG-3' consensus sequence in chromatin. Can bind to the mitochondrial dysfunction motif (MDM) present in the upstream regions of mitochondrial dysfunction stimulon (MDS) genes involved in mitochondrial retrograde regulation (MRR). Together with NAC051/NAC052 and JMJ14, regulates gene expression and flowering time by associating with the histone demethylase JMJ14, probably by the promotion of RNA-mediated gene silencing. The protein is NAC domain containing protein 50 of Arabidopsis thaliana (Mouse-ear cress).